The sequence spans 525 residues: Cytochrome P450 4V2 (525 aa).

Residues 13–33 traverse the membrane as a helical segment; it reads LLLWGAASAVSVAGATVLLNI. Glu329 and Cys467 together coordinate heme.

Belongs to the cytochrome P450 family. Heme is required as a cofactor.

Its subcellular location is the endoplasmic reticulum membrane. It carries out the reaction dodecanoate + reduced [NADPH--hemoprotein reductase] + O2 = 12-hydroxydodecanoate + oxidized [NADPH--hemoprotein reductase] + H2O + H(+). It catalyses the reaction tetradecanoate + reduced [NADPH--hemoprotein reductase] + O2 = 14-hydroxytetradecanoate + oxidized [NADPH--hemoprotein reductase] + H2O + H(+). The enzyme catalyses hexadecanoate + reduced [NADPH--hemoprotein reductase] + O2 = 16-hydroxyhexadecanoate + oxidized [NADPH--hemoprotein reductase] + H2O + H(+). The catalysed reaction is (5Z,8Z,11Z,14Z,17Z)-eicosapentaenoate + reduced [NADPH--hemoprotein reductase] + O2 = 20-hydroxy-(5Z,8Z,11Z,14Z,17Z)-eicosapentaenoate + oxidized [NADPH--hemoprotein reductase] + H2O + H(+). It carries out the reaction (4Z,7Z,10Z,13Z,16Z,19Z)-docosahexaenoate + reduced [NADPH--hemoprotein reductase] + O2 = 22-hydroxy-(4Z,7Z,10Z,13Z,16Z,19Z)-docosahexaenoate + oxidized [NADPH--hemoprotein reductase] + H2O + H(+). It functions in the pathway lipid metabolism; fatty acid metabolism. Inhibited by N-hydroxy-N'-(4-n-butyl-2-methylphenyl formamidine)(HET0016) with an IC(50) of 38 nM. A cytochrome P450 monooxygenase involved in fatty acid metabolism in the eye. Catalyzes the omega-hydroxylation of polyunsaturated fatty acids (PUFAs) docosahexaenoate (DHA) and its precursor eicosapentaenoate (EPA), and may contribute to the homeostasis of these retinal PUFAs. Omega hydroxylates saturated fatty acids such as laurate, myristate and palmitate, the catalytic efficiency decreasing in the following order: myristate &gt; laurate &gt; palmitate (C14&gt;C12&gt;C16). Mechanistically, uses molecular oxygen inserting one oxygen atom into a substrate, and reducing the second into a water molecule, with two electrons provided by NADPH via cytochrome P450 reductase (CPR; NADPH-ferrihemoprotein reductase). This Rattus norvegicus (Rat) protein is Cytochrome P450 4V2 (Cyp4v2).